A 454-amino-acid polypeptide reads, in one-letter code: Arginine biosynthesis bifunctional protein ArgJ, mitochondrial (454 aa).

6 residues coordinate substrate: threonine 184, lysine 213, threonine 224, glutamate 311, asparagine 449, and threonine 454. Residue threonine 224 is the Nucleophile of the active site.

Belongs to the ArgJ family. Heterodimer of an alpha and a beta chain. In terms of processing, the alpha and beta chains are autoproteolytically processed from a single precursor protein within the mitochondrion.

The protein resides in the mitochondrion matrix. The enzyme catalyses N(2)-acetyl-L-ornithine + L-glutamate = N-acetyl-L-glutamate + L-ornithine. The catalysed reaction is L-glutamate + acetyl-CoA = N-acetyl-L-glutamate + CoA + H(+). It functions in the pathway amino-acid biosynthesis; L-arginine biosynthesis; L-ornithine and N-acetyl-L-glutamate from L-glutamate and N(2)-acetyl-L-ornithine (cyclic): step 1/1. It participates in amino-acid biosynthesis; L-arginine biosynthesis; N(2)-acetyl-L-ornithine from L-glutamate: step 1/4. Its function is as follows. Catalyzes two activities which are involved in the cyclic version of arginine biosynthesis: the synthesis of acetylglutamate from glutamate and acetyl-CoA, and of ornithine by transacetylation between acetylornithine and glutamate. The sequence is that of Arginine biosynthesis bifunctional protein ArgJ, mitochondrial from Aspergillus clavatus (strain ATCC 1007 / CBS 513.65 / DSM 816 / NCTC 3887 / NRRL 1 / QM 1276 / 107).